A 122-amino-acid chain; its full sequence is Basic phospholipase A2 homolog (122 aa).

Cystine bridges form between Cys-26–Cys-115, Cys-28–Cys-44, Cys-43–Cys-95, Cys-49–Cys-122, Cys-50–Cys-88, Cys-57–Cys-81, and Cys-75–Cys-86. Residues 105 to 117 form an important for membrane-damaging activities in eukaryotes and bacteria; heparin-binding region; the sequence is KRYMTYPNILCSS.

This sequence belongs to the phospholipase A2 family. Group II subfamily. N49 sub-subfamily. As to expression, expressed by the venom gland.

The protein localises to the secreted. The chain is Basic phospholipase A2 homolog from Gloydius halys (Chinese water mocassin).